A 324-amino-acid polypeptide reads, in one-letter code: tRNA dimethylallyltransferase (324 aa).

17 to 24 (GPTASGKT) is a binding site for ATP. 19–24 (TASGKT) lines the substrate pocket. Interaction with substrate tRNA regions lie at residues 42–45 (DSAL), 166–170 (QRIQR), and 251–256 (RCVGYR).

The protein belongs to the IPP transferase family. As to quaternary structure, monomer. Mg(2+) serves as cofactor.

It carries out the reaction adenosine(37) in tRNA + dimethylallyl diphosphate = N(6)-dimethylallyladenosine(37) in tRNA + diphosphate. Catalyzes the transfer of a dimethylallyl group onto the adenine at position 37 in tRNAs that read codons beginning with uridine, leading to the formation of N6-(dimethylallyl)adenosine (i(6)A). This is tRNA dimethylallyltransferase from Burkholderia thailandensis (strain ATCC 700388 / DSM 13276 / CCUG 48851 / CIP 106301 / E264).